The primary structure comprises 145 residues: 3-hydroxyacyl-[acyl-carrier-protein] dehydratase FabZ (145 aa).

His49 is an active-site residue.

It belongs to the thioester dehydratase family. FabZ subfamily.

The protein localises to the cytoplasm. It carries out the reaction a (3R)-hydroxyacyl-[ACP] = a (2E)-enoyl-[ACP] + H2O. Involved in unsaturated fatty acids biosynthesis. Catalyzes the dehydration of short chain beta-hydroxyacyl-ACPs and long chain saturated and unsaturated beta-hydroxyacyl-ACPs. This is 3-hydroxyacyl-[acyl-carrier-protein] dehydratase FabZ from Ehrlichia ruminantium (strain Gardel).